A 578-amino-acid polypeptide reads, in one-letter code: MGNAIREKTIHGIAASSGIAIAKAYRLETPDLAAEKRTVADVEAEIARLEAAVAKAKEELEAIKQHALEKLGEDKAAIFAAHLLVLDDPELLNPIKEKIQTERVNAEYALDETALFFISMFEAMDNEYMKERAADIRDVTKRVLAHLLGVTISNPSLISEEVVIIAEDLTPSDTAQLNRQYVKGFATDIGGRTSHSAIMARSLEIPAVVGTKTVTAEVKNGDIVIVDGLDGQVIINPSPELLAQYEQKRARYEAQKAEWAKLVHEATVTADGIHVELAANIGTPDDVKGALANGAEGIGLYRTEFLYMGRSELPTEDEQFVAYKTVLEQMNGKPVVVRTLDIGGDKELPYLQLPKEMNPFLGFRAIRLCLEMQDMFRTQLRALLRASVYGNLKIMFPMIATLDEFRQAKAILLEEKEALLRQGVAVADGIEVGMMVEIPAAAVMADQFAKEVDFFSIGTNDLIQYTMAADRMNERVAYLYQPYNPAILRLISHVIDAAHREGKWVGMCGEMAGDPIAIPILLALGLDEFSMSATSILPARAQLKKLAKEEAARIKETVLSLGTAEEVVSFVKRTFSLA.

Catalysis depends on histidine 195, which acts as the Tele-phosphohistidine intermediate. Arginine 302 and arginine 338 together coordinate phosphoenolpyruvate. The Mg(2+) site is built by glutamate 437 and aspartate 461. Phosphoenolpyruvate is bound by residues asparagine 460–aspartate 461 and arginine 471. The active-site Proton donor is the cysteine 508.

The protein belongs to the PEP-utilizing enzyme family. As to quaternary structure, homodimer. Requires Mg(2+) as cofactor.

Its subcellular location is the cytoplasm. The enzyme catalyses L-histidyl-[protein] + phosphoenolpyruvate = N(pros)-phospho-L-histidyl-[protein] + pyruvate. General (non sugar-specific) component of the phosphoenolpyruvate-dependent sugar phosphotransferase system (sugar PTS). This major carbohydrate active-transport system catalyzes the phosphorylation of incoming sugar substrates concomitantly with their translocation across the cell membrane. Enzyme I transfers the phosphoryl group from phosphoenolpyruvate (PEP) to the phosphoryl carrier protein (HPr). This is Phosphoenolpyruvate-protein phosphotransferase (ptsI) from Geobacillus stearothermophilus (Bacillus stearothermophilus).